The sequence spans 977 residues: Macrophage colony-stimulating factor 1 receptor (977 aa).

The first 18 residues, 1 to 18 (MFFALLFLIGILLGQVQG), serve as a signal peptide directing secretion. The Extracellular segment spans residues 19 to 519 (WSEPRIRLSS…MEVSDQIFTS (501 aa)). 5 Ig-like C2-type domains span residues 22–109 (PRIR…VHVF), 120–198 (PSTS…EKVS), 213–305 (PYVY…TQLL), 316–407 (PKLS…ASIT), and 408–513 (FDIK…MEVS). The cysteines at positions 48 and 92 are disulfide-linked. N-linked (GlcNAc...) asparagine glycosylation is found at N98, N101, N154, N163, N244, N286, N298, N361, N424, and N455. Cystine bridges form between C138/C187 and C234/C289. The cysteines at positions 430 and 495 are disulfide-linked. Residues 520-540 (AMCGSTVAMVVLGLLLIFMIY) traverse the membrane as a helical segment. The Cytoplasmic segment spans residues 541–977 (KYKQKPRYEI…LMKPNNYQFC (437 aa)). Residues 544 to 576 (QKPRYEIRWKIIEATNGNNYTFIDPTQLPYNEK) are regulatory juxtamembrane domain. The residue at position 563 (Y563) is a Phosphotyrosine; by autocatalysis. One can recognise a Protein kinase domain in the interval 584 to 917 (LKLGKTLGAG…KISQMIQRML (334 aa)). ATP contacts are provided by residues 590 to 598 (LGAGAFGKV) and K618. Residues Y701 and Y725 each carry the phosphotyrosine; by autocatalysis modification. Catalysis depends on D781, which acts as the Proton acceptor. The segment at 799–821 (DFGLARDIMNDSNYVVKGNARLP) is activation loop. Residues Y812 and Y929 each carry the phosphotyrosine; by autocatalysis modification. Positions 919–977 (ETSEQQDTQEYKNIPTEAEAEQQLESCDPVKHEDESFETSCDQEEEDQPLMKPNNYQFC) are disordered. A compositionally biased stretch (acidic residues) spans 953–966 (ESFETSCDQEEEDQ). A Phosphotyrosine; by autocatalysis modification is found at Y974.

Belongs to the protein kinase superfamily. Tyr protein kinase family. CSF-1/PDGF receptor subfamily. As to quaternary structure, monomer. Homodimer. Interacts with CSF1. Autophosphorylated in response to CSF1 binding. autophosphorylation, leading to its degradation. Post-translationally, ubiquitinated. Becomes rapidly polyubiquitinated after autophosphorylation, leading to its degradation.

It localises to the cell membrane. It carries out the reaction L-tyrosyl-[protein] + ATP = O-phospho-L-tyrosyl-[protein] + ADP + H(+). Present in an inactive conformation in the absence of bound ligand. CSF1 binding leads to dimerization and activation by autophosphorylation on tyrosine residues. Tyrosine-protein kinase that acts as a cell-surface receptor for CSF1 and plays an essential role in the regulation of survival, proliferation and differentiation of hematopoietic precursor cells, especially mononuclear phagocytes, such as macrophages and monocytes. Plays an important role in innate immunity and in inflammatory processes. Plays an important role in the regulation of osteoclast proliferation and differentiation, the regulation of bone resorption, and is required for normal bone development. Promotes reorganization of the actin cytoskeleton, regulates formation of membrane ruffles, cell adhesion and cell migration. Activates several signaling pathways in response to ligand binding. This Danio rerio (Zebrafish) protein is Macrophage colony-stimulating factor 1 receptor (csf1r).